Consider the following 463-residue polypeptide: MAPTQVLQRALKQKEYIKIIELAVKSPNNRVYLLNLQDDTFWKRISRECYGRVDFIHVFRNKLDWKIISISPLSITIANRFKSHLIWSLVSEQKFLTQDFILAFGDLLDMEEISKNYNNLSLSVQQKYAHKLNWKRIVASHILLKEWFQEPIKQYINYDYVSKYKHLNTALINNVSCMENVNLSAYMQDCVKISDALILYCLREGRVQELKLIAHSIPWSDHMLVFDEYPGLVNTLHSDWKCIDKWTAFNAPPAYYIRHMFAHPEFRNEFEENFNAQYWHKLINYTVITNVRASAAFNLMLFQNYKNRVDWTELQQCNQFLNLGVLYRAPFPRVDLQAVPRFDDEKLWKAYGRHLKLNSDECDDPQVIPLHMNVKTAYHKMILVEPCATQQEHDSVETCSAIFKLNGGEEGLLNWNLLSATQPICPFNLRHLQNVNANTYRNKNNHFMEDVYEQMVAIQMNNN.

This is an uncharacterized protein from Lepidoptera (butterflies and moths).